The sequence spans 84 residues: Transcription elongation factor 1 homolog (84 aa).

Residues C26, C29, C50, and C53 each coordinate Zn(2+).

The protein belongs to the ELOF1 family.

Its subcellular location is the nucleus. In terms of biological role, transcription elongation factor implicated in the maintenance of proper chromatin structure in actively transcribed regions. The chain is Transcription elongation factor 1 homolog from Caenorhabditis elegans.